The sequence spans 404 residues: UPF0261 protein CTC_01794 (404 aa).

It belongs to the UPF0261 family.

The chain is UPF0261 protein CTC_01794 from Clostridium tetani (strain Massachusetts / E88).